The primary structure comprises 96 residues: Large ribosomal subunit protein bL25 (96 aa).

This sequence belongs to the bacterial ribosomal protein bL25 family. In terms of assembly, part of the 50S ribosomal subunit; part of the 5S rRNA/L5/L18/L25 subcomplex. Contacts the 5S rRNA. Binds to the 5S rRNA independently of L5 and L18.

This is one of the proteins that binds to the 5S RNA in the ribosome where it forms part of the central protuberance. This Francisella tularensis subsp. holarctica (strain FTNF002-00 / FTA) protein is Large ribosomal subunit protein bL25.